Here is a 428-residue protein sequence, read N- to C-terminus: Aminotransferase verI (428 aa).

At lysine 254 the chain carries N6-(pyridoxal phosphate)lysine.

The protein belongs to the class-I pyridoxal-phosphate-dependent aminotransferase family. Pyridoxal 5'-phosphate is required as a cofactor.

It participates in mycotoxin biosynthesis. Functionally, aminotransferase; part of the gene cluster that mediates the biosynthesis of 11'-deoxyverticillin A, one of the dimeric epipolythiodioxopiperazines (ETPs) from the verticillin family that act as mycotoxins. 11'-deoxyverticillin A is required for normal conidiation. The nonribosomal peptide synthetase verP is speculated to be responsible for condensation of amino acids to form the carbon skeleton of verticillin, whereas the cluster-specific tailoring enzymes are involved in further modifications leading to the production of 11'-deoxyverticillin A. The chain is Aminotransferase verI from Clonostachys rogersoniana.